The primary structure comprises 694 residues: Elongation factor G (694 aa).

Residues 8 to 287 (EDYRNFGIMA…AVVEFLPAPT (280 aa)) form the tr-type G domain. GTP is bound by residues 17–24 (AHIDAGKT), 86–90 (DTPGH), and 140–143 (NKMD).

The protein belongs to the TRAFAC class translation factor GTPase superfamily. Classic translation factor GTPase family. EF-G/EF-2 subfamily.

The protein localises to the cytoplasm. Catalyzes the GTP-dependent ribosomal translocation step during translation elongation. During this step, the ribosome changes from the pre-translocational (PRE) to the post-translocational (POST) state as the newly formed A-site-bound peptidyl-tRNA and P-site-bound deacylated tRNA move to the P and E sites, respectively. Catalyzes the coordinated movement of the two tRNA molecules, the mRNA and conformational changes in the ribosome. In Brucella melitensis biotype 2 (strain ATCC 23457), this protein is Elongation factor G.